The chain runs to 309 residues: MAGPAFRAAAVRVRVPATSANLGPGFDALGLALGLYDDVVVRVADSGLHIDIAGEGSETLPRDEKHLLVRSLRTAFDLLGGQPRGLEIVCANRIPHGRGLGSSSAAICAGIVAARAVTIGGEARLDDAALLDLATEIEGHPDNVAACLLGGFTLSWMESGAARAIRMEPSDSIVPVVFVPGKPVLTQTARGLLPRSVPHVDAAANAGRAALLVEALTRRPELLLPATEDRLHQEYRAPAMPESTALVERLRGDGIPAVISGAGPTVMALADADTADKVEALAGTDWAANRLGLDQQGATVLPLATASDT.

Residue 95 to 105 participates in ATP binding; sequence PHGRGLGSSSA.

It belongs to the GHMP kinase family. Homoserine kinase subfamily.

It is found in the cytoplasm. The enzyme catalyses L-homoserine + ATP = O-phospho-L-homoserine + ADP + H(+). It functions in the pathway amino-acid biosynthesis; L-threonine biosynthesis; L-threonine from L-aspartate: step 4/5. Functionally, catalyzes the ATP-dependent phosphorylation of L-homoserine to L-homoserine phosphate. The sequence is that of Homoserine kinase from Streptomyces coelicolor (strain ATCC BAA-471 / A3(2) / M145).